Reading from the N-terminus, the 505-residue chain is RNA-splicing ligase RtcB homolog (505 aa).

Residues aspartate 119, cysteine 122, histidine 227, and histidine 259 each coordinate Mn(2+). GMP is bound at residue 226-230 (NHYAE). Phosphoserine is present on serine 300. Histidine 353 lines the Mn(2+) pocket. GMP is bound by residues 353–354 (HN), 402–405 (GGTM), serine 409, and 428–431 (HGAG). The GMP-histidine intermediate role is filled by histidine 428. Residue lysine 496 forms a Glycyl lysine isopeptide (Lys-Gly) (interchain with G-Cter in SUMO2) linkage. Position 504 (lysine 504) interacts with GMP.

It belongs to the RtcB family. In terms of assembly, catalytic component of the tRNA-splicing ligase complex. Requires Mn(2+) as cofactor.

It is found in the nucleus. The protein localises to the cytoplasm. It carries out the reaction a 3'-end 3'-phospho-ribonucleotide-RNA + a 5'-end dephospho-ribonucleoside-RNA + GTP = a ribonucleotidyl-ribonucleotide-RNA + GMP + diphosphate. It catalyses the reaction a 3'-end 2',3'-cyclophospho-ribonucleotide-RNA + a 5'-end dephospho-ribonucleoside-RNA + GTP + H2O = a ribonucleotidyl-ribonucleotide-RNA + GMP + diphosphate + H(+). Catalytic subunit of the tRNA-splicing ligase complex that acts by directly joining spliced tRNA halves to mature-sized tRNAs by incorporating the precursor-derived splice junction phosphate into the mature tRNA as a canonical 3',5'-phosphodiester. May act as an RNA ligase with broad substrate specificity, and may function toward other RNAs. The polypeptide is RNA-splicing ligase RtcB homolog (Macaca fascicularis (Crab-eating macaque)).